The following is a 323-amino-acid chain: Transcription factor JunD (323 aa).

2 disordered regions span residues 138–173 and 197–221; these read QNQL…APGL and PFAA…QIVP. The span at 141-167 shows a compositional bias: gly residues; that stretch reads LGGGGGPNGGAAAAGGGGGGGGGGGGE. Residues 198 to 212 show a composition bias toward pro residues; sequence FAAPPPRLPPPPPPP. A basic motif region spans residues 242 to 269; sequence RIKAERKRLRNRIAASKCRKRKLERISR. Residues 242 to 305 form the bZIP domain; that stretch reads RIKAERKRLR…AQLKQKVLSH (64 aa). Positions 270–298 are leucine-zipper; that stretch reads LEEKVKSLKSQNTELASTASLLREQVAQL.

The protein belongs to the bZIP family. Jun subfamily. In terms of assembly, binds DNA as a dimer.

It is found in the nucleus. This is Transcription factor JunD (JUND) from Gallus gallus (Chicken).